The following is a 1490-amino-acid chain: WD repeat-containing protein 7 (1490 aa).

WD repeat units lie at residues 17 to 56, 62 to 104, 156 to 199, 324 to 366, 404 to 443, 462 to 507, and 558 to 597; these read APTH…QINP, GHTA…CIEF, ISPD…SDMQ, LICP…DKQG, NEPL…IVQL, GHRN…MKHI, and RHLF…LDRC. Disordered regions lie at residues 761-783 and 911-945; these read DEEE…YRSS and GDHM…IVQG. Residues 768-782 show a composition bias toward basic and acidic residues; the sequence is IMRQRREESDPEYRS. At Ser935 the chain carries Phosphoserine. Polar residues predominate over residues 936-945; it reads PPTSSNIVQG. 2 WD repeats span residues 1351–1390 and 1392–1432; these read PAIC…CQTI and GHKG…LGSI. Ser1456 carries the post-translational modification Phosphoserine.

The sequence is that of WD repeat-containing protein 7 (WDR7) from Homo sapiens (Human).